The chain runs to 331 residues: Major outer membrane protein P.IB (331 aa).

The first 19 residues, 1–19, serve as a signal peptide directing secretion; sequence MKKSLIALTLAALPVAAMA.

The protein belongs to the Gram-negative porin family. In terms of assembly, homotrimer.

The protein resides in the cell outer membrane. Its function is as follows. Serves as a slightly cation selective porin. In Neisseria meningitidis serogroup B, this protein is Major outer membrane protein P.IB (porB).